The sequence spans 300 residues: NAD kinase (300 aa).

Asp75 functions as the Proton acceptor in the catalytic mechanism. Residues 75–76, 149–150, Arg177, Asp179, 190–195, Ala214, and Gln248 each bind NAD(+); these read DG, ND, and TAYALS.

Belongs to the NAD kinase family. A divalent metal cation is required as a cofactor.

It is found in the cytoplasm. It catalyses the reaction NAD(+) + ATP = ADP + NADP(+) + H(+). In terms of biological role, involved in the regulation of the intracellular balance of NAD and NADP, and is a key enzyme in the biosynthesis of NADP. Catalyzes specifically the phosphorylation on 2'-hydroxyl of the adenosine moiety of NAD to yield NADP. The polypeptide is NAD kinase (Burkholderia orbicola (strain MC0-3)).